Here is a 276-residue protein sequence, read N- to C-terminus: Ribosomal RNA small subunit methyltransferase A (276 aa).

The S-adenosyl-L-methionine site is built by asparagine 16, leucine 18, glycine 43, glutamate 64, aspartate 89, and asparagine 109.

The protein belongs to the class I-like SAM-binding methyltransferase superfamily. rRNA adenine N(6)-methyltransferase family. RsmA subfamily.

The protein resides in the cytoplasm. The enzyme catalyses adenosine(1518)/adenosine(1519) in 16S rRNA + 4 S-adenosyl-L-methionine = N(6)-dimethyladenosine(1518)/N(6)-dimethyladenosine(1519) in 16S rRNA + 4 S-adenosyl-L-homocysteine + 4 H(+). Functionally, specifically dimethylates two adjacent adenosines (A1518 and A1519) in the loop of a conserved hairpin near the 3'-end of 16S rRNA in the 30S particle. May play a critical role in biogenesis of 30S subunits. The sequence is that of Ribosomal RNA small subunit methyltransferase A from Marinobacter nauticus (strain ATCC 700491 / DSM 11845 / VT8) (Marinobacter aquaeolei).